A 250-amino-acid polypeptide reads, in one-letter code: Putative ABC transporter ATP-binding protein YjkB (250 aa).

Positions 13–245 (ISFRSVRKSY…PQHEAAKEFL (233 aa)) constitute an ABC transporter domain. Residue 49-56 (GPSGSGKS) coordinates ATP.

This sequence belongs to the ABC transporter superfamily.

This is Putative ABC transporter ATP-binding protein YjkB (yjkB) from Bacillus subtilis (strain 168).